The chain runs to 488 residues: MNTIASVTLPHHVHAPRYDRQQLQSRIVHFGFGAFHRAHQALLTDRVLNAQGGDWGICEISLFSGDQLMSQLRAQNHLYTVLEKGADGNQVIIVGAVHECLNAKLDSLAAIIEKFCEPQVAIVSLTITEKGYCIDPATGALDTSNPRIIHDLQTPEEPHSAPGILVEALKRRRERGLTPFTVLSCDNIPDNGHVVKNAVLGMAEKRSPELAGWIKEHVSFPGTMVDRIVPAATDESLVEISQHLGVNDPCAISCEPFIQWVVEDNFVAGRPAWEVAGVQMVNDVLPWEEMKLRMLNGSHSFLAYLGYLSGFAHISDCMQDRAFRHAARTLMLDEQAPTLQIKDVDLTQYADKLIARFANPALKHKTWQIAMDGSQKLPQRMLAGIRIHQGRETDWSLLALGVAGWMRYVSGVDDAGNAIDVRDPLSDKIRELVAGSSSEQRVTALLSLREVFGDDLPDNPHFVQAIEQAWQQIVQFGAHQALLNTLKI.

27 to 38 contacts NAD(+); the sequence is IVHFGFGAFHRA.

Belongs to the mannitol dehydrogenase family. UxuB subfamily.

This is an uncharacterized protein from Escherichia coli (strain K12).